The primary structure comprises 316 residues: Polyprenyl transferase dpchC (316 aa).

Helical transmembrane passes span 24-44 (PLFT…AKMA), 60-80 (ALCF…NDWI), 105-125 (EAMV…EVML), 154-174 (MLGI…AVIG), 192-212 (CLPL…AYSY), 234-254 (IHLL…IYLF), 258-278 (SLWL…QQLV), and 296-316 (FILG…TGSA).

The protein belongs to the UbiA prenyltransferase family. Mg(2+) is required as a cofactor.

It is found in the membrane. The protein operates within secondary metabolite biosynthesis; terpenoid biosynthesis. Functionally, polyprenyl transferase; part of the gene cluster that mediates the biosynthesis of the diterpenoid pyrones higginsianins A and B. The first step of the pathway is the synthesis of the alpha-pyrone moiety by the polyketide synthase dpchA via condensation of one acetyl-CoA starter unit with 3 malonyl-CoA units and 2 methylations. The alpha-pyrone is then combined with geranylgeranyl pyrophosphate (GGPP) formed by the GGPP synthase dpchD through the action of the prenyltransferase dpchC to yield a linear alpha-pyrone diterpenoid. Subsequent steps in the diterpenoid pyrone biosynthetic pathway involve the decalin core formation, which is initiated by the epoxidation of the C10-C11 olefin by the FAD-dependent oxidoreductase dpchE, and is followed by a cyclization cascade catalyzed by the terpene cyclase dpchB. The short chain dehydrogenase/reductase dpchG then oxidizes the 8S hydroxy group to a ketone and the short chain dehydrogenase/reductase dpchH reduces the ketone to the 8R hydroxy group to yield higginsianin B. Finally, the FAD-dependent oxidoreductase dpchF converts higginsianin B into higginsianin A. This is Polyprenyl transferase dpchC from Colletotrichum higginsianum (strain IMI 349063) (Crucifer anthracnose fungus).